Here is a 464-residue protein sequence, read N- to C-terminus: tRNA-2-methylthio-N(6)-dimethylallyladenosine synthase (464 aa).

An MTTase N-terminal domain is found at 19–135; the sequence is GSYWITTFGC…LENLLGKVDL (117 aa). [4Fe-4S] cluster contacts are provided by C28, C64, C98, C170, C174, and C177. The 239-residue stretch at 156–394 folds into the Radical SAM core domain; that stretch reads RESSICGWVN…DLVEKTARSR (239 aa). One can recognise a TRAM domain in the interval 396-464; the sequence is KRYINNIESV…PFSLTGELYL (69 aa).

Belongs to the methylthiotransferase family. MiaB subfamily. Monomer. It depends on [4Fe-4S] cluster as a cofactor.

The protein resides in the cytoplasm. The enzyme catalyses N(6)-dimethylallyladenosine(37) in tRNA + (sulfur carrier)-SH + AH2 + 2 S-adenosyl-L-methionine = 2-methylsulfanyl-N(6)-dimethylallyladenosine(37) in tRNA + (sulfur carrier)-H + 5'-deoxyadenosine + L-methionine + A + S-adenosyl-L-homocysteine + 2 H(+). Catalyzes the methylthiolation of N6-(dimethylallyl)adenosine (i(6)A), leading to the formation of 2-methylthio-N6-(dimethylallyl)adenosine (ms(2)i(6)A) at position 37 in tRNAs that read codons beginning with uridine. The polypeptide is tRNA-2-methylthio-N(6)-dimethylallyladenosine synthase (Prochlorococcus marinus (strain AS9601)).